A 169-amino-acid chain; its full sequence is Hydroperoxy fatty acid reductase gpx1 (169 aa).

The active site involves Cys-41.

The protein belongs to the glutathione peroxidase family. In terms of assembly, monomer.

The enzyme catalyses a hydroperoxy polyunsaturated fatty acid + NADPH + H(+) = a hydroxy polyunsaturated fatty acid + NADP(+) + H2O. Its activity is regulated as follows. Mercaptosuccinate, pCMB, and nethylmaleimide act as inhibitors of the catalytic activity. Functionally, hydroperoxy fatty acid reductase essential for the removal of lipid hydroperoxides under normal and stress conditions, leading to the protection of membrane integrity. The polypeptide is Hydroperoxy fatty acid reductase gpx1 (gpx1) (Synechocystis sp. (strain ATCC 27184 / PCC 6803 / Kazusa)).